A 244-amino-acid polypeptide reads, in one-letter code: Chaperone protein FimB/FhaD (244 aa).

The first 24 residues, 1–24, serve as a signal peptide directing secretion; it reads MARWRRRLGVAALGAAMLASLAPA.

It belongs to the periplasmic pilus chaperone family.

Its subcellular location is the periplasm. Its function is as follows. Required for the biogenesis of the filamentous hemagglutinin and the fimbria. In Bordetella pertussis (strain Tohama I / ATCC BAA-589 / NCTC 13251), this protein is Chaperone protein FimB/FhaD (fimB).